Consider the following 391-residue polypeptide: CBS domain-containing protein CBSX5 (391 aa).

CBS domains lie at 16-81 (GKPP…DHDH) and 331-391 (MARK…ENDM).

The protein is CBS domain-containing protein CBSX5 (CBSX5) of Arabidopsis thaliana (Mouse-ear cress).